The primary structure comprises 465 residues: Putative subtilisin-like proteinase 1 (465 aa).

An N-terminal signal peptide occupies residues 1-17; sequence MILAIISLSVVICREVS. Residues 19 to 90 enclose the Inhibitor I9 domain; sequence YIVMFDQDPS…VKMVVKDSPV (72 aa). The 333-residue stretch at 115 to 447 folds into the Peptidase S8 domain; the sequence is PWGLARVGGS…PSLFNANKKK (333 aa). Active-site charge relay system residues include aspartate 148 and histidine 180. Cysteine 329 and cysteine 360 are joined by a disulfide. Serine 386 serves as the catalytic Charge relay system.

It belongs to the peptidase S8 family.

The protein localises to the secreted. It is found in the extracellular space. In terms of biological role, may be involved in the degradation of proteins for nutrient acquisition or possess a regulatory function by proteolytic activation of proproteins. The chain is Putative subtilisin-like proteinase 1 (SPL1) from Encephalitozoon cuniculi (strain GB-M1) (Microsporidian parasite).